Here is a 188-residue protein sequence, read N- to C-terminus: Small ribosomal subunit protein uS12m (188 aa).

A mitochondrion-targeting transit peptide spans 1-63; that stretch reads MSGGRWISNL…AAFRLPQSSG (63 aa).

This sequence belongs to the universal ribosomal protein uS12 family.

It localises to the mitochondrion. Its function is as follows. Protein S12 is involved in the translation initiation step. This Oenothera elata subsp. hookeri (Hooker's evening primrose) protein is Small ribosomal subunit protein uS12m (RPS12).